A 291-amino-acid chain; its full sequence is Tyrosine recombinase XerA (291 aa).

Positions 9 to 102 constitute a Core-binding (CB) domain; that stretch reads PESGDLYNAF…AVRRFLKWIN (94 aa). Residues 115–279 enclose the Tyr recombinase domain; the sequence is KEVKALDEIQ…VLDDLRNEYL (165 aa). Catalysis depends on residues Arg-150, Lys-175, His-231, Arg-234, and His-257. Residue Tyr-266 is the O-(3'-phospho-DNA)-tyrosine intermediate of the active site.

This sequence belongs to the 'phage' integrase family. XerA subfamily.

It is found in the cytoplasm. Site-specific tyrosine recombinase, which acts by catalyzing the cutting and rejoining of the recombining DNA molecules. Probably involved in the resolution of chromosome dimers. Binds to the dif site. This Saccharolobus solfataricus (strain ATCC 35092 / DSM 1617 / JCM 11322 / P2) (Sulfolobus solfataricus) protein is Tyrosine recombinase XerA.